Here is a 392-residue protein sequence, read N- to C-terminus: GTPase Obg (392 aa).

The Obg domain occupies 1–159 (MKFIDEALIR…RDLQLELMLL (159 aa)). The OBG-type G domain occupies 160–333 (ADVGMLGLPN…LCRDIMDFIE (174 aa)). GTP-binding positions include 166-173 (GLPNAGKS), 191-195 (FTTLV), 213-216 (DIPG), 283-286 (NKID), and 314-316 (SAA). Mg(2+) is bound by residues Ser-173 and Thr-193. A disordered region spans residues 362 to 392 (EQVFTEDDQEGDDWDDWSEDDEEGVEIIYKP). Residues 365–386 (FTEDDQEGDDWDDWSEDDEEGV) show a composition bias toward acidic residues.

The protein belongs to the TRAFAC class OBG-HflX-like GTPase superfamily. OBG GTPase family. Monomer. It depends on Mg(2+) as a cofactor.

It is found in the cytoplasm. Its function is as follows. An essential GTPase which binds GTP, GDP and possibly (p)ppGpp with moderate affinity, with high nucleotide exchange rates and a fairly low GTP hydrolysis rate. Plays a role in control of the cell cycle, stress response, ribosome biogenesis and in those bacteria that undergo differentiation, in morphogenesis control. The chain is GTPase Obg from Histophilus somni (strain 129Pt) (Haemophilus somnus).